Consider the following 101-residue polypeptide: MIPGELFIQDGEIELNAGRKTVTLSVANTGDRPIQVGSHYHFFETNPALKFDRKKARGMRLDIAAGTAVRFEPGQTRDVQLVALAGKRMVYGFRGDVMGKL.

This sequence belongs to the urease beta subunit family. In terms of assembly, heterotrimer of UreA (gamma), UreB (beta) and UreC (alpha) subunits. Three heterotrimers associate to form the active enzyme.

The protein localises to the cytoplasm. It catalyses the reaction urea + 2 H2O + H(+) = hydrogencarbonate + 2 NH4(+). Its pathway is nitrogen metabolism; urea degradation; CO(2) and NH(3) from urea (urease route): step 1/1. The polypeptide is Urease subunit beta (Bradyrhizobium sp. (strain BTAi1 / ATCC BAA-1182)).